Consider the following 83-residue polypeptide: Large ribosomal subunit protein eL31 (83 aa).

It belongs to the eukaryotic ribosomal protein eL31 family.

In Methanococcus aeolicus (strain ATCC BAA-1280 / DSM 17508 / OCM 812 / Nankai-3), this protein is Large ribosomal subunit protein eL31.